A 138-amino-acid polypeptide reads, in one-letter code: Ribosome-binding factor A (138 aa).

The segment covering 1–20 has biased composition (low complexity); it reads MSSRPPSSSGPAGIPKGAPS. The tract at residues 1 to 21 is disordered; sequence MSSRPPSSSGPAGIPKGAPSQ.

The protein belongs to the RbfA family. Monomer. Binds 30S ribosomal subunits, but not 50S ribosomal subunits or 70S ribosomes.

It is found in the cytoplasm. Functionally, one of several proteins that assist in the late maturation steps of the functional core of the 30S ribosomal subunit. Associates with free 30S ribosomal subunits (but not with 30S subunits that are part of 70S ribosomes or polysomes). Required for efficient processing of 16S rRNA. May interact with the 5'-terminal helix region of 16S rRNA. This is Ribosome-binding factor A from Granulibacter bethesdensis (strain ATCC BAA-1260 / CGDNIH1).